Here is an 88-residue protein sequence, read N- to C-terminus: Small ribosomal subunit protein bS20 (88 aa).

This sequence belongs to the bacterial ribosomal protein bS20 family.

Binds directly to 16S ribosomal RNA. The sequence is that of Small ribosomal subunit protein bS20 from Methylocella silvestris (strain DSM 15510 / CIP 108128 / LMG 27833 / NCIMB 13906 / BL2).